We begin with the raw amino-acid sequence, 386 residues long: N-acetylneuraminate epimerase (386 aa).

A signal peptide spans 1–29 (MGMQMKNSKKMMTLMALCLSVAITTSGYA). 7 Kelch repeats span residues 51-95 (VIYV…VFLN), 97-149 (ELYV…VKLN), 151-186 (TMALITGGVNEHIFDKYFIDIAAAAGDDSEKNRVIY), 187-232 (NYFN…AMEN), 235-284 (LTLI…LAGA), 306-355 (QNYT…NYGD), and 357-386 (IFLIGGENAKGKPVSSVISFAMHDGKLLIE). Glutamate 241 (proton acceptor) is an active-site residue.

It belongs to the NanM family. Homodimer.

Its subcellular location is the periplasm. It catalyses the reaction N-acetyl-alpha-neuraminate = N-acetyl-beta-neuraminate. Its function is as follows. Converts alpha-N-acetylneuranimic acid (Neu5Ac) to the beta-anomer, accelerating the equilibrium between the alpha- and beta-anomers. Probably facilitates sialidase-negative bacteria to compete successfully for limited amounts of extracellular Neu5Ac, which is likely taken up in the beta-anomer. In addition, the rapid removal of sialic acid from solution might be advantageous to the bacterium to damp down host responses. This is N-acetylneuraminate epimerase from Salmonella arizonae (strain ATCC BAA-731 / CDC346-86 / RSK2980).